The following is a 267-amino-acid chain: Phosphate import ATP-binding protein PstB (267 aa).

Positions isoleucine 21–isoleucine 262 constitute an ABC transporter domain. Position 53–60 (glycine 53–serine 60) interacts with ATP.

Belongs to the ABC transporter superfamily. Phosphate importer (TC 3.A.1.7) family. The complex is composed of two ATP-binding proteins (PstB), two transmembrane proteins (PstC and PstA) and a solute-binding protein (PstS).

It localises to the cell inner membrane. The catalysed reaction is phosphate(out) + ATP + H2O = ADP + 2 phosphate(in) + H(+). Its function is as follows. Part of the ABC transporter complex PstSACB involved in phosphate import. Responsible for energy coupling to the transport system. This Mesorhizobium japonicum (strain LMG 29417 / CECT 9101 / MAFF 303099) (Mesorhizobium loti (strain MAFF 303099)) protein is Phosphate import ATP-binding protein PstB.